The sequence spans 227 residues: UPF0758 protein llmg_1515 (227 aa).

Residues 103 to 225 (QVLSSKEYGM…YYSFRERDSN (123 aa)) form the MPN domain. 3 residues coordinate Zn(2+): His-174, His-176, and Asp-187. The JAMM motif signature appears at 174–187 (HNHPSGNLQPSQAD).

The protein belongs to the UPF0758 family.

This is UPF0758 protein llmg_1515 from Lactococcus lactis subsp. cremoris (strain MG1363).